Consider the following 343-residue polypeptide: Cytoplasmic tRNA 2-thiolation protein 1 (343 aa).

The protein belongs to the TtcA family. CTU1/NCS6/ATPBD3 subfamily.

Its subcellular location is the cytoplasm. It functions in the pathway tRNA modification; 5-methoxycarbonylmethyl-2-thiouridine-tRNA biosynthesis. Functionally, plays a central role in 2-thiolation of mcm(5)S(2)U at tRNA wobble positions of tRNA(Lys), tRNA(Glu) and tRNA(Gln). Directly binds tRNAs and probably acts by catalyzing adenylation of tRNAs, an intermediate required for 2-thiolation. It is unclear whether it acts as a sulfurtransferase that transfers sulfur from thiocarboxylated URM1 onto the uridine of tRNAs at wobble position. In Drosophila erecta (Fruit fly), this protein is Cytoplasmic tRNA 2-thiolation protein 1.